Consider the following 70-residue polypeptide: Small, acid-soluble spore protein alpha (70 aa).

Belongs to the alpha/beta-type SASP family.

In terms of biological role, SASP are bound to spore DNA. They are double-stranded DNA-binding proteins that cause DNA to change to an a-like conformation. They protect the DNA backbone from chemical and enzymatic cleavage and are thus involved in dormant spore's high resistance to UV light. The protein is Small, acid-soluble spore protein alpha of Paraclostridium bifermentans (Clostridium bifermentans).